The following is a 167-amino-acid chain: Leukotoxin-activating lysine-acyltransferase LktC serotype A1 (167 aa).

Active-site residues include histidine 22 and aspartate 91.

This sequence belongs to the RTX toxin acyltransferase family.

It is found in the cytoplasm. The catalysed reaction is a fatty acyl-[ACP] + L-lysyl-[protein] = N(6)-(fatty acyl)-L-lysyl-[protein] + holo-[ACP] + H(+). Its function is as follows. Involved in fatty acylation of the protoxin (LktA) at two internal lysine residues, thereby converting it to the active toxin. This Mannheimia haemolytica (Pasteurella haemolytica) protein is Leukotoxin-activating lysine-acyltransferase LktC serotype A1 (lktC).